We begin with the raw amino-acid sequence, 599 residues long: CAP-Gly domain-containing linker protein 4 (599 aa).

ANK repeat units follow at residues 65 to 101 (TSVSELFAILRQWVPQVQQNIDIIGNEILKRGCNVND), 149 to 180 (TNMNALHYASYFDVPELIRVLLKTSKPKDVDA), and 186 to 215 (NFGTALHIAAHNLCAGAVKTLLELGANPAF). Residues 303–345 (GTTEFASGQWAGIELDEPEGKNNGSVGRVQYFKCAPKYGIFAP) form the CAP-Gly 1 domain. Residues 387–482 (SGLMTSKKEN…TSAANNTHRE (96 aa)) form a disordered region. A compositionally biased stretch (low complexity) spans 443 to 462 (LSTSSSSGKKTLSKSPSLPS). Over residues 468-478 (LKSSTTSAANN) the composition is skewed to polar residues. One can recognise a CAP-Gly 2 domain in the interval 505–547 (GTTNFAPGYWYGIELEKPHGKNDGSVGGVQYFSCSPRYGIFAP). At Ser-557 the chain carries Phosphoserine. The segment at 565–599 (SSNKQNHSYPGFRRSFSTTSASSQKEINRRNAFAK) is disordered. Over residues 576–587 (FRRSFSTTSASS) the composition is skewed to low complexity.

In Rattus norvegicus (Rat), this protein is CAP-Gly domain-containing linker protein 4 (Clip4).